Here is a 255-residue protein sequence, read N- to C-terminus: DNA repair protein RecO (255 aa).

This sequence belongs to the RecO family.

In terms of biological role, involved in DNA repair and RecF pathway recombination. The chain is DNA repair protein RecO from Listeria monocytogenes serotype 4b (strain CLIP80459).